The following is a 509-amino-acid chain: DNA nucleotidylexotransferase (509 aa).

Residues 1–24 form a disordered region; the sequence is MDPPRASHLSPRKKRPRQTGALMA. Residues 11–17 carry the Nuclear localization signal motif; the sequence is PRKKRPR. Residues 27–124 form the BRCT domain; the sequence is PQDIKFQDLV…KPVEMTGKHQ (98 aa). The residue at position 134 (Ser-134) is a Phosphoserine. The mediates interaction with DNTTIP2 stretch occupies residues 151–509; the sequence is SQYACQRRTT…DYIEPWERNA (359 aa). The segment at 258–262 is involved in DNA binding; it reads VGLKT. Residues 333–338 and 342–345 contribute to the a 2'-deoxyribonucleoside 5'-triphosphate site; these read GFRRGK and HDVD. Residues Asp-343, Asp-345, and Asp-433 each contribute to the Mg(2+) site. Position 448 to 449 (448 to 449) interacts with a 2'-deoxyribonucleoside 5'-triphosphate; the sequence is GW.

This sequence belongs to the DNA polymerase type-X family. In terms of assembly, interacts with PRP19 and DNTTIP1. Forms a ternary complex with DNTTIP2 and core histone. Released from this complex by PCNA. Interacts with TRERF1. Mg(2+) is required as a cofactor.

It is found in the nucleus. The catalysed reaction is DNA(n) + a 2'-deoxyribonucleoside 5'-triphosphate = DNA(n+1) + diphosphate. Its function is as follows. Template-independent DNA polymerase which catalyzes the random addition of deoxynucleoside 5'-triphosphate to the 3'-end of a DNA initiator. One of the in vivo functions of this enzyme is the addition of nucleotides at the junction (N region) of rearranged Ig heavy chain and T-cell receptor gene segments during the maturation of B- and T-cells. This chain is DNA nucleotidylexotransferase (DNTT), found in Homo sapiens (Human).